The following is a 332-amino-acid chain: Malate dehydrogenase, cytoplasmic (332 aa).

Residues 16 to 17, aspartate 43, and glycine 90 contribute to the NAD(+) site; that span reads QI. Arginine 99 provides a ligand contact to oxaloacetate. NAD(+)-binding residues include glutamine 113 and asparagine 132. Oxaloacetate-binding residues include asparagine 132, arginine 163, histidine 188, and serine 243. Residue histidine 188 is the Proton acceptor of the active site.

The protein belongs to the LDH/MDH superfamily. MDH type 2 family. In terms of assembly, monomer. As to expression, expressed constitutively in roots.

The protein resides in the cell membrane. It carries out the reaction (S)-malate + NAD(+) = oxaloacetate + NADH + H(+). Its function is as follows. Malate dehydrogenase; catalyzes a reversible NAD-dependent dehydrogenase reaction involved in central metabolism and redox homeostasis. This Zea mays (Maize) protein is Malate dehydrogenase, cytoplasmic.